We begin with the raw amino-acid sequence, 506 residues long: Probable UTP--glucose-1-phosphate uridylyltransferase (506 aa).

A phosphoserine mark is found at Ser-15 and Ser-17. Residues 115–118 (LNGG), Lys-129, Gln-192, and Gly-221 contribute to the UTP site. 117–118 (GG) lines the substrate pocket. Residue Lys-129 coordinates Mg(2+). Substrate-binding positions include His-222 and 250–252 (NID). The UTP site is built by Asp-252 and Lys-394. Asp-252 serves as a coordination point for Mg(2+). Lys-394 is an active-site residue. Residues 455 to 506 (HLTITGDVNIGRNVTLKGTVIIVASDANRIDIPNGSVLENCVITGNLNILEH) form an oligomerization region.

The protein belongs to the UDPGP type 1 family. In terms of assembly, homooctamer.

It localises to the cytoplasm. It is found in the nucleus. The enzyme catalyses alpha-D-glucose 1-phosphate + UTP + H(+) = UDP-alpha-D-glucose + diphosphate. Plays a central role as a glucosyl donor in cellular metabolic pathways. This Schizosaccharomyces pombe (strain 972 / ATCC 24843) (Fission yeast) protein is Probable UTP--glucose-1-phosphate uridylyltransferase (fyu1).